Reading from the N-terminus, the 339-residue chain is 3-isopropylmalate dehydrogenase (339 aa).

The substrate site is built by arginine 88, arginine 98, arginine 122, and aspartate 212. Mg(2+)-binding residues include aspartate 212, aspartate 236, and aspartate 240. 272–284 (GSAPDIAGQGIAD) is a binding site for NAD(+).

It belongs to the isocitrate and isopropylmalate dehydrogenases family. LeuB type 2 subfamily. As to quaternary structure, homodimer. The cofactor is Mg(2+). Mn(2+) is required as a cofactor.

The protein localises to the cytoplasm. It carries out the reaction (2R,3S)-3-isopropylmalate + NAD(+) = 4-methyl-2-oxopentanoate + CO2 + NADH. Its pathway is amino-acid biosynthesis; L-leucine biosynthesis; L-leucine from 3-methyl-2-oxobutanoate: step 3/4. Functionally, catalyzes the oxidation of 3-carboxy-2-hydroxy-4-methylpentanoate (3-isopropylmalate) to 3-carboxy-4-methyl-2-oxopentanoate. The product decarboxylates to 4-methyl-2 oxopentanoate. In Corynebacterium urealyticum (strain ATCC 43042 / DSM 7109), this protein is 3-isopropylmalate dehydrogenase.